The primary structure comprises 228 residues: DNA mismatch repair protein MutH (228 aa).

Belongs to the MutH family.

The protein localises to the cytoplasm. In terms of biological role, sequence-specific endonuclease that cleaves unmethylated GATC sequences. It is involved in DNA mismatch repair. The chain is DNA mismatch repair protein MutH from Yersinia pseudotuberculosis serotype IB (strain PB1/+).